We begin with the raw amino-acid sequence, 171 residues long: 16S rRNA aminocarboxypropyltransferase (171 aa).

S-adenosyl-L-methionine contacts are provided by threonine 17, leucine 67, leucine 90, and threonine 109.

Belongs to the TDD superfamily. TSR3 family.

It localises to the cytoplasm. The enzyme catalyses an N(1)-methylpseudouridine in rRNA + S-adenosyl-L-methionine = N(1)-methyl-N(3)-[(3S)-3-amino-3-carboxypropyl]pseudouridine in rRNA + S-methyl-5'-thioadenosine + H(+). In terms of biological role, aminocarboxypropyltransferase that catalyzes the aminocarboxypropyl transfer on pseudouridine corresponding to position 914 in M.jannaschii 16S rRNA. It constitutes the last step in biosynthesis of the hypermodified N1-methyl-N3-(3-amino-3-carboxypropyl) pseudouridine (m1acp3-Psi). The protein is 16S rRNA aminocarboxypropyltransferase of Methanobrevibacter smithii (strain ATCC 35061 / DSM 861 / OCM 144 / PS).